The primary structure comprises 429 residues: Adenylosuccinate synthetase (429 aa).

Residues 12–18 (GDEGKGK) and 40–42 (GHT) contribute to the GTP site. D13 functions as the Proton acceptor in the catalytic mechanism. Positions 13 and 40 each coordinate Mg(2+). IMP-binding positions include 13-16 (DEGK), 38-41 (NAGH), T128, R142, Q223, T238, and R302. Catalysis depends on H41, which acts as the Proton donor. Residue 298 to 304 (TTTGRPR) coordinates substrate. GTP-binding positions include R304, 330 to 332 (SID), and 412 to 414 (SVG).

This sequence belongs to the adenylosuccinate synthetase family. In terms of assembly, homodimer. Requires Mg(2+) as cofactor.

It is found in the cytoplasm. The enzyme catalyses IMP + L-aspartate + GTP = N(6)-(1,2-dicarboxyethyl)-AMP + GDP + phosphate + 2 H(+). It functions in the pathway purine metabolism; AMP biosynthesis via de novo pathway; AMP from IMP: step 1/2. Functionally, plays an important role in the de novo pathway of purine nucleotide biosynthesis. Catalyzes the first committed step in the biosynthesis of AMP from IMP. This Bacillus thuringiensis (strain Al Hakam) protein is Adenylosuccinate synthetase.